The sequence spans 218 residues: Adenylate kinase (218 aa).

Residue 10-15 (GAGKGT) participates in ATP binding. The interval 30-59 (STGDMLRAAVKAGTPLGIAAKKIMDEGGLV) is NMP. AMP is bound by residues T31, R36, 57–59 (GLV), 85–88 (GFPR), and Q92. The segment at 122-159 (GRRVHPASGRTYHVKFNPPKVAGKDDLTGEELIQRDDD) is LID. ATP-binding positions include R123 and 132-133 (TY). The AMP site is built by R156 and R167. G203 contacts ATP.

The protein belongs to the adenylate kinase family. In terms of assembly, monomer.

It localises to the cytoplasm. The catalysed reaction is AMP + ATP = 2 ADP. It functions in the pathway purine metabolism; AMP biosynthesis via salvage pathway; AMP from ADP: step 1/1. In terms of biological role, catalyzes the reversible transfer of the terminal phosphate group between ATP and AMP. Plays an important role in cellular energy homeostasis and in adenine nucleotide metabolism. This is Adenylate kinase from Janthinobacterium sp. (strain Marseille) (Minibacterium massiliensis).